Reading from the N-terminus, the 642-residue chain is Voltage-gated potassium channel KCNC2 (642 aa).

Over Met1–Arg233 the chain is Cytoplasmic. The interval Asp45–Asp98 is disordered. Residues Pro56–Pro72 are compositionally biased toward pro residues. Residues Phe78–Asp98 are compositionally biased toward gly residues. Positions 128, 134, 155, and 156 each coordinate Zn(2+). The helical transmembrane segment at Phe234–Thr254 threads the bilayer. N-linked (GlcNAc...) asparagine glycans are attached at residues Asn263 and Asn270. Residues Thr287–Phe307 traverse the membrane as a helical segment. Residues Ser308–Asn317 are Cytoplasmic-facing. A helical transmembrane segment spans residues Leu318–Gly338. A helical; Voltage-sensor membrane pass occupies residues Phe350–Leu372. Topologically, residues Arg373–Glu385 are cytoplasmic. The chain crosses the membrane as a helical span at residues Phe386–Tyr406. K(+) is bound by residues Thr441, Leu442, Gly443, and Tyr444. The Selectivity filter motif lies at Thr441–Asp446. Residues Val457 to Val477 form a helical membrane-spanning segment. Over Asn478–Leu642 the chain is Cytoplasmic. The disordered stretch occupies residues Ser542–Gly576. A Phosphoserine modification is found at Ser604.

The protein belongs to the potassium channel family. C (Shaw) (TC 1.A.1.2) subfamily. Kv3.2/KCNC2 sub-subfamily. As to quaternary structure, homotetramer and heterotetramer with other channel-forming alpha subunits, such as KCNC1. Interacts with KCNC1. Homotetramer or heterotetramer channel activity is regulated by association with modulating ancillary subunits such as KCNE1, KCNE2 and KCNE3, creating a functionally diverse range of channel complexes. Interacts with KCNE1, KCNE2 and KCNE3. Phosphorylated by PKA in cortical synaptosomes. cAMP-dependent phosphorylation inhibits channel activity. Histamine H2 receptor- and PKA-induced phosphorylation extends action potential spike duration, reduces action potential spike amplitude, sustains maximum firing frequency in hippocampal interneurons; also reduces the incidence of high-frequency oscillations in hippocampal CA3 pyramidal cell layers. As to expression, weakly expressed in the brain at postnatal age day 7 (P7) and increased at P60. Not detectable in newborn hippocampus. Expressed weakly at P7 in the early developing hippocampus, increasing progressively and reaching a plateau of expression at P14 that is maintained throughout P51. Expressed in paravalbumin- and somatostain-containing inhibitory interneurons of the hippocampus; in the CA1/CA3 stratum oriens-alveus and stratum pyramidale and in cells within the hilus and subgranular layer of the dentate gyrus (DG). Strongly expressed in parvalbumin (PV)-containing fast-spiking GABAergic inhibitor interneurons in deep cortical layers V and VI. Also expressed in non-fast-spiking calbindin (CB)- and/or somatostatin (SOM)-containing interneurons in deep cortical layers V and VI. Expressed in starburst amacrine cells of the retina in the inner nuclear layer (INL) and ganglion cell layer (GCL). Expressed in the suprachiasmatic nucleus (SCN) (at protein level). Expressed in the early developing brain, increasing progressively until P14.

It is found in the cell membrane. It localises to the membrane. Its subcellular location is the perikaryon. The protein localises to the cell projection. The protein resides in the axon. It is found in the dendrite. It localises to the postsynaptic cell membrane. Its subcellular location is the presynaptic cell membrane. The protein localises to the synapse. The protein resides in the synaptosome. It is found in the apical cell membrane. It localises to the basolateral cell membrane. It catalyses the reaction K(+)(in) = K(+)(out). Inhibited by millimolar levels of tetraethylammonium (TEA). Contrary to other channels, inhibited only by millimolar levels of 4-aminopyridine (4-AP). Inhibited by Stichodactyla helianthus peptide ShK. Functionally, voltage-gated potassium channel that mediates transmembrane potassium transport in excitable membranes, primarily in the brain. Contributes to the regulation of the fast action potential repolarization and in sustained high-frequency firing in neurons of the central nervous system. Homotetramer channels mediate delayed-rectifier voltage-dependent potassium currents that activate rapidly at high-threshold voltages and inactivate slowly. Forms tetrameric channels through which potassium ions pass in accordance with their electrochemical gradient. The channel alternates between opened and closed conformations in response to the voltage difference across the membrane. Can form functional homotetrameric and heterotetrameric channels that contain variable proportions of KCNC1, and possibly other family members as well; channel properties depend on the type of alpha subunits that are part of the channel. Channel properties may be modulated by either the association with ancillary subunits, such as KCNE1, KCNE2 and KCNE3 or indirectly by nitric oxide (NO) through a cGMP- and PKG-mediated signaling cascade, slowing channel activation and deactivation of delayed rectifier potassium channels. Contributes to fire sustained trains of very brief action potentials at high frequency in thalamocortical and suprachiasmatic nucleus (SCN) neurons, in hippocampal and neocortical interneurons and in retinal ganglion cells. Sustained maximal action potential firing frequency in inhibitory hippocampal interneurons is negatively modulated by histamine H2 receptor activation in a cAMP- and protein kinase (PKA) phosphorylation-dependent manner. Plays a role in maintaining the fidelity of synaptic transmission in neocortical GABAergic interneurons by generating action potential (AP) repolarization at nerve terminals, thus reducing spike-evoked calcium influx and GABA neurotransmitter release. Required for long-range synchronization of gamma oscillations over distance in the neocortex. Contributes to the modulation of the circadian rhythm of spontaneous action potential firing in suprachiasmatic nucleus (SCN) neurons in a light-dependent manner. The sequence is that of Voltage-gated potassium channel KCNC2 from Mus musculus (Mouse).